The sequence spans 435 residues: Nuclear hormone receptor family member nhr-136 (435 aa).

The nuclear receptor DNA-binding region spans 50-129 (PSNCKVCRHS…AGMNPSAIQA (80 aa)). NR C4-type zinc fingers lie at residues 53-73 (CKVC…CNGC) and 89-112 (CLKM…CRAC). Positions 194–430 (RDIRKLDELI…RYTRISNLYE (237 aa)) constitute an NR LBD domain.

This sequence belongs to the nuclear hormone receptor family.

It localises to the nucleus. Orphan nuclear receptor. The chain is Nuclear hormone receptor family member nhr-136 (nhr-136) from Caenorhabditis elegans.